Here is a 316-residue protein sequence, read N- to C-terminus: tRNA selenocysteine 1-associated protein 1-like (316 aa).

RRM domains lie at 6–89 and 99–178; these read TSLW…YATY and FSVF…IAVN. Over residues 239 to 248 the composition is skewed to pro residues; the sequence is PPMGMPPMPP. A disordered region spans residues 239-285; it reads PPMGMPPMPPDMQGSTEAHDGTEEVEEDPSEDPNPQVDVEELNRQYM.

This sequence belongs to the RRM TRSPAP family.

The protein resides in the nucleus. It is found in the cytoplasm. Involved in the early steps of selenocysteine biosynthesis and tRNA(Sec) charging to the later steps resulting in the cotranslational incorporation of selenocysteine into selenoproteins. The polypeptide is tRNA selenocysteine 1-associated protein 1-like (trnau1apl) (Danio rerio (Zebrafish)).